Here is an 80-residue protein sequence, read N- to C-terminus: Translation initiation factor IF-1 (80 aa).

One can recognise an S1-like domain in the interval 6–80 (EKRKKEESDV…TSRGRIVYRK (75 aa)).

The protein belongs to the IF-1 family. Component of the 30S ribosomal translation pre-initiation complex which assembles on the 30S ribosome in the order IF-2 and IF-3, IF-1 and N-formylmethionyl-tRNA(fMet); mRNA recruitment can occur at any time during PIC assembly.

The protein localises to the cytoplasm. In terms of biological role, one of the essential components for the initiation of protein synthesis. Stabilizes the binding of IF-2 and IF-3 on the 30S subunit to which N-formylmethionyl-tRNA(fMet) subsequently binds. Helps modulate mRNA selection, yielding the 30S pre-initiation complex (PIC). Upon addition of the 50S ribosomal subunit IF-1, IF-2 and IF-3 are released leaving the mature 70S translation initiation complex. This Deinococcus geothermalis (strain DSM 11300 / CIP 105573 / AG-3a) protein is Translation initiation factor IF-1.